Consider the following 261-residue polypeptide: Zinc finger protein 664 (261 aa).

C2H2-type zinc fingers lie at residues 3-25, 31-53, 59-81, 87-109, 115-137, 143-165, 171-193, 199-221, and 227-249; these read YKCPMCREFFSERADLFMHQKIH, HKCDKCDKGFFHISELHIHWRDH, YKCDDCGKDFSTTTKLNRHKKIH, YKCYECGKAFNWSSHLQIHMRVH, YVCSECGRGFSNSSNLCMHQRVH, FKCEECGKAFRHTSSLCMHQRVH, YKCYECGKAFSQSSSLCIHQRVH, YRCCGCGKAFSQSSSLCIHQRVH, and FKCDECGKAFSQSTSLCIHQRVH. Residue lysine 257 forms a Glycyl lysine isopeptide (Lys-Gly) (interchain with G-Cter in SUMO2) linkage.

The protein belongs to the krueppel C2H2-type zinc-finger protein family.

The protein resides in the nucleus. Its function is as follows. May be involved in transcriptional regulation. This chain is Zinc finger protein 664, found in Homo sapiens (Human).